Reading from the N-terminus, the 188-residue chain is GTPase KRas (188 aa).

GTP contacts are provided by residues 10 to 18, 29 to 35, 59 to 60, and 116 to 119; these read GAGGVGKSA, VDEYDPT, AG, and NKCD. The Effector region signature appears at 32–40; the sequence is YDPTIEDSY. Residues 167 to 188 form a disordered region; it reads KEKMSKEGKKKKKKSKTKCILM. C185 carries the post-translational modification Cysteine methyl ester. C185 is lipidated: S-farnesyl cysteine. The propeptide at 186–188 is removed in mature form; the sequence is ILM.

The protein belongs to the small GTPase superfamily. Ras family.

The protein localises to the cell membrane. It localises to the cytoplasm. The catalysed reaction is GTP + H2O = GDP + phosphate + H(+). With respect to regulation, alternates between an inactive form bound to GDP and an active form bound to GTP. Activated by a guanine nucleotide-exchange factor (GEF) and inactivated by a GTPase-activating protein (GAP). Functionally, ras proteins bind GDP/GTP and possess intrinsic GTPase activity. Plays an important role in the regulation of cell proliferation. The sequence is that of GTPase KRas (kras1) from Oryzias latipes (Japanese rice fish).